A 190-amino-acid polypeptide reads, in one-letter code: ADP-ribosylation factor-like protein 6 (190 aa).

Residue glycine 2 is the site of N-myristoyl glycine attachment. GTP-binding positions include 24–31, 69–73, and 130–133; these read GLDNSGKT, DMAGQ, and NKMD.

This sequence belongs to the small GTPase superfamily. Arf family. In terms of tissue distribution, specifically expressed in ciliated cells.

Its subcellular location is the cytoplasm. This chain is ADP-ribosylation factor-like protein 6, found in Caenorhabditis elegans.